Here is a 336-residue protein sequence, read N- to C-terminus: MCLLMEINNNANNTNTTIDNHKAKMSLVLSTDAKPRLKWTCDLHHKFIEAVNQLGGPNKATPKGLMKVMEIPGLTLYHLKSHLQKYRLGKSMKFDDNKLEVSSASENQEVESKNDSRDLRGCSVTEENSNPAKEGLQITEALQMQMEVQKKLHEQIEVQRHLQVKIEAQGKYLQSVLMKAQQTLAGYSSSNLGMDFARTELSRLASMVNRGCPSTSFSELTQVEEEEEGFLWYKKPENRGISQLRCSVESSLTSSETSETKLDTDNNLNKSIELPLMEINSEVMKGKKRSINDVVCVEQPLMKRAFGVDDDEHLKLSLNTYKKDMEACTNIGLGFN.

Positions 31 to 91 constitute an HTH myb-type domain; that stretch reads TDAKPRLKWT…HLQKYRLGKS (61 aa). The H-T-H motif DNA-binding region spans 62–87; it reads PKGLMKVMEIPGLTLYHLKSHLQKYR. Residues 100-134 form a disordered region; sequence EVSSASENQEVESKNDSRDLRGCSVTEENSNPAKE. Basic and acidic residues predominate over residues 110–120; sequence VESKNDSRDLR. Residues 139-159 are a coiled coil; sequence TEALQMQMEVQKKLHEQIEVQ. The LHEQLE motif lies at 152 to 157; that stretch reads LHEQIE.

This sequence belongs to the MYB-CC family.

The protein resides in the nucleus. The chain is Myb family transcription factor PHL8 from Arabidopsis thaliana (Mouse-ear cress).